A 213-amino-acid polypeptide reads, in one-letter code: MKDTAKHQGLRNQLVTTLEQKGITDRAVLDAIKKIPRHLFLNSSFEDFAYQDKAFPIGAGQTISQPYTVAFQSQLLEVKKDHKILEIGTGSGYQTAVLFMLGAKVYTVERQSELFKTTSNLFPKLNIRPKHVTFGDGYKGLPNFAPFDSIIVTAGAPFIPQPLMAQLKIGGRLVIPLGEDVQIMTLLIRKNETQFEKHEFGEFRFVPLLEDKN.

Ser-64 is a catalytic residue.

Belongs to the methyltransferase superfamily. L-isoaspartyl/D-aspartyl protein methyltransferase family.

It is found in the cytoplasm. The catalysed reaction is [protein]-L-isoaspartate + S-adenosyl-L-methionine = [protein]-L-isoaspartate alpha-methyl ester + S-adenosyl-L-homocysteine. Its function is as follows. Catalyzes the methyl esterification of L-isoaspartyl residues in peptides and proteins that result from spontaneous decomposition of normal L-aspartyl and L-asparaginyl residues. It plays a role in the repair and/or degradation of damaged proteins. In Flavobacterium johnsoniae (strain ATCC 17061 / DSM 2064 / JCM 8514 / BCRC 14874 / CCUG 350202 / NBRC 14942 / NCIMB 11054 / UW101) (Cytophaga johnsonae), this protein is Protein-L-isoaspartate O-methyltransferase.